Reading from the N-terminus, the 396-residue chain is Corticosteroid-binding globulin (396 aa).

Residues 1–22 form the signal peptide; the sequence is MSLALYTCLLWLCTSGLWTAQA. Asn-88 and Asn-216 each carry an N-linked (GlcNAc...) asparagine glycan. Residue Gln-246 coordinates cortisol. N-linked (GlcNAc...) asparagine glycosylation occurs at Asn-252. Asp-278 is a cortisol binding site. Asn-319 and Asn-352 each carry an N-linked (GlcNAc...) asparagine glycan. Position 384 (Trp-384) interacts with cortisol.

The protein belongs to the serpin family. In terms of tissue distribution, expressed by the liver; secreted in plasma.

It localises to the secreted. Its function is as follows. Major transport protein for glucocorticoids and progestins in the blood of almost all vertebrate species. This Rattus norvegicus (Rat) protein is Corticosteroid-binding globulin (Serpina6).